Reading from the N-terminus, the 504-residue chain is Maturase K (504 aa).

Belongs to the intron maturase 2 family. MatK subfamily.

Its subcellular location is the plastid. It is found in the chloroplast. Functionally, usually encoded in the trnK tRNA gene intron. Probably assists in splicing its own and other chloroplast group II introns. The polypeptide is Maturase K (Ochroma pyramidale (Balsa)).